A 139-amino-acid polypeptide reads, in one-letter code: Small ribosomal subunit protein eS6 (139 aa).

It belongs to the eukaryotic ribosomal protein eS6 family.

In Methanosarcina barkeri (strain Fusaro / DSM 804), this protein is Small ribosomal subunit protein eS6.